Here is a 512-residue protein sequence, read N- to C-terminus: Cytochrome P450 4d1 (512 aa).

The heme site is built by Glu-316 and Cys-456.

Belongs to the cytochrome P450 family. Heme is required as a cofactor.

The protein resides in the endoplasmic reticulum membrane. It is found in the microsome membrane. Involved in the metabolism of insect hormones and in the breakdown of synthetic insecticides. The polypeptide is Cytochrome P450 4d1 (Cyp4d1) (Drosophila simulans (Fruit fly)).